The chain runs to 387 residues: DNA primase small subunit PriS (387 aa).

Residues aspartate 98, aspartate 100, and aspartate 289 contribute to the active site.

Belongs to the eukaryotic-type primase small subunit family. In terms of assembly, heterodimer of a small subunit (PriS) and a large subunit (PriL). Mg(2+) serves as cofactor. The cofactor is Mn(2+).

In terms of biological role, catalytic subunit of DNA primase, an RNA polymerase that catalyzes the synthesis of short RNA molecules used as primers for DNA polymerase during DNA replication. The small subunit contains the primase catalytic core and has DNA synthesis activity on its own. Binding to the large subunit stabilizes and modulates the activity, increasing the rate of DNA synthesis while decreasing the length of the DNA fragments, and conferring RNA synthesis capability. The DNA polymerase activity may enable DNA primase to also catalyze primer extension after primer synthesis. May also play a role in DNA repair. This chain is DNA primase small subunit PriS, found in Halorubrum lacusprofundi (strain ATCC 49239 / DSM 5036 / JCM 8891 / ACAM 34).